A 186-amino-acid chain; its full sequence is dTTP/UTP pyrophosphatase (186 aa).

The active-site Proton acceptor is D66.

It belongs to the Maf family. YhdE subfamily. A divalent metal cation is required as a cofactor.

It is found in the cytoplasm. It catalyses the reaction dTTP + H2O = dTMP + diphosphate + H(+). The enzyme catalyses UTP + H2O = UMP + diphosphate + H(+). Nucleoside triphosphate pyrophosphatase that hydrolyzes dTTP and UTP. May have a dual role in cell division arrest and in preventing the incorporation of modified nucleotides into cellular nucleic acids. This Pyrococcus horikoshii (strain ATCC 700860 / DSM 12428 / JCM 9974 / NBRC 100139 / OT-3) protein is dTTP/UTP pyrophosphatase.